A 181-amino-acid chain; its full sequence is Ribonuclease HII (181 aa).

One can recognise an RNase H type-2 domain in the interval 1 to 181 (MICGIDEVGR…SLHRKNFKLI (181 aa)). A divalent metal cation-binding residues include Asp6, Glu7, and Asp98.

This sequence belongs to the RNase HII family. Mn(2+) is required as a cofactor. It depends on Mg(2+) as a cofactor.

It is found in the cytoplasm. It carries out the reaction Endonucleolytic cleavage to 5'-phosphomonoester.. In terms of biological role, endonuclease that specifically degrades the RNA of RNA-DNA hybrids. The protein is Ribonuclease HII (rnhB) of Borreliella burgdorferi (strain ATCC 35210 / DSM 4680 / CIP 102532 / B31) (Borrelia burgdorferi).